We begin with the raw amino-acid sequence, 491 residues long: Cysteine--tRNA ligase (491 aa).

Cys31 provides a ligand contact to Zn(2+). The 'HIGH' region signature appears at 33 to 43 (PTVYGDAHLGH). Residues Cys226, His251, and Glu255 each coordinate Zn(2+). The short motif at 283 to 287 (KMGKS) is the 'KMSKS' region element. Lys286 contributes to the ATP binding site.

Belongs to the class-I aminoacyl-tRNA synthetase family. Monomer. The cofactor is Zn(2+).

Its subcellular location is the cytoplasm. It catalyses the reaction tRNA(Cys) + L-cysteine + ATP = L-cysteinyl-tRNA(Cys) + AMP + diphosphate. The polypeptide is Cysteine--tRNA ligase (Bacteroides fragilis (strain ATCC 25285 / DSM 2151 / CCUG 4856 / JCM 11019 / LMG 10263 / NCTC 9343 / Onslow / VPI 2553 / EN-2)).